Consider the following 742-residue polypeptide: Phosphoribosylformylglycinamidine synthase subunit PurL (742 aa).

The active site involves His-54. Residues Tyr-57 and Lys-96 each coordinate ATP. Glu-98 is a binding site for Mg(2+). Residues 99 to 102 and Arg-121 contribute to the substrate site; that span reads SHNH. His-100 (proton acceptor) is an active-site residue. Asp-122 contributes to the Mg(2+) binding site. Residue Gln-245 participates in substrate binding. Asp-273 is a binding site for Mg(2+). Residue 317–319 participates in substrate binding; it reads ESQ. Residues Asp-500 and Gly-537 each coordinate ATP. Position 538 (Asn-538) interacts with Mg(2+). Residue Ser-540 participates in substrate binding.

Belongs to the FGAMS family. In terms of assembly, monomer. Part of the FGAM synthase complex composed of 1 PurL, 1 PurQ and 2 PurS subunits.

Its subcellular location is the cytoplasm. It carries out the reaction N(2)-formyl-N(1)-(5-phospho-beta-D-ribosyl)glycinamide + L-glutamine + ATP + H2O = 2-formamido-N(1)-(5-O-phospho-beta-D-ribosyl)acetamidine + L-glutamate + ADP + phosphate + H(+). The protein operates within purine metabolism; IMP biosynthesis via de novo pathway; 5-amino-1-(5-phospho-D-ribosyl)imidazole from N(2)-formyl-N(1)-(5-phospho-D-ribosyl)glycinamide: step 1/2. Functionally, part of the phosphoribosylformylglycinamidine synthase complex involved in the purines biosynthetic pathway. Catalyzes the ATP-dependent conversion of formylglycinamide ribonucleotide (FGAR) and glutamine to yield formylglycinamidine ribonucleotide (FGAM) and glutamate. The FGAM synthase complex is composed of three subunits. PurQ produces an ammonia molecule by converting glutamine to glutamate. PurL transfers the ammonia molecule to FGAR to form FGAM in an ATP-dependent manner. PurS interacts with PurQ and PurL and is thought to assist in the transfer of the ammonia molecule from PurQ to PurL. In Bacillus velezensis (strain DSM 23117 / BGSC 10A6 / LMG 26770 / FZB42) (Bacillus amyloliquefaciens subsp. plantarum), this protein is Phosphoribosylformylglycinamidine synthase subunit PurL.